The chain runs to 469 residues: ATP-dependent protease ATPase subunit HslU (469 aa).

ATP-binding positions include isoleucine 24, 66-71 (GVGKTE), aspartate 282, glutamate 347, and arginine 419.

The protein belongs to the ClpX chaperone family. HslU subfamily. As to quaternary structure, a double ring-shaped homohexamer of HslV is capped on each side by a ring-shaped HslU homohexamer. The assembly of the HslU/HslV complex is dependent on binding of ATP.

The protein localises to the cytoplasm. Functionally, ATPase subunit of a proteasome-like degradation complex; this subunit has chaperone activity. The binding of ATP and its subsequent hydrolysis by HslU are essential for unfolding of protein substrates subsequently hydrolyzed by HslV. HslU recognizes the N-terminal part of its protein substrates and unfolds these before they are guided to HslV for hydrolysis. The polypeptide is ATP-dependent protease ATPase subunit HslU (Listeria monocytogenes serotype 4a (strain HCC23)).